We begin with the raw amino-acid sequence, 700 residues long: Non-hemolytic phospholipase C (700 aa).

The tat-type signal signal peptide spans 1–34; it reads MTNQNRRDFLRLAAGTAGAAALQLFPPVIREALA.

It belongs to the bacterial phospholipase C family. Post-translationally, predicted to be exported by the Tat system. The position of the signal peptide cleavage has not been experimentally proven.

The enzyme catalyses a 1,2-diacyl-sn-glycero-3-phosphocholine + H2O = phosphocholine + a 1,2-diacyl-sn-glycerol + H(+). In terms of biological role, hydrolyzes phosphatidylserine as well as phosphatidylcholine. The sequence is that of Non-hemolytic phospholipase C (plcN) from Burkholderia pseudomallei (strain K96243).